A 207-amino-acid chain; its full sequence is Holliday junction branch migration complex subunit RuvA (207 aa).

Positions 1–63 (MISSLRGTVL…EDSLQLFGFS (63 aa)) are domain I. The domain II stretch occupies residues 64–142 (GLEQLQVFEL…ACRRPSAPSA (79 aa)). The interval 142–146 (ARRPS) is flexible linker. Residues 147-207 (APSSVSDSVL…RLGPANQAAR (61 aa)) form a domain III region.

Belongs to the RuvA family. As to quaternary structure, homotetramer. Forms an RuvA(8)-RuvB(12)-Holliday junction (HJ) complex. HJ DNA is sandwiched between 2 RuvA tetramers; dsDNA enters through RuvA and exits via RuvB. An RuvB hexamer assembles on each DNA strand where it exits the tetramer. Each RuvB hexamer is contacted by two RuvA subunits (via domain III) on 2 adjacent RuvB subunits; this complex drives branch migration. In the full resolvosome a probable DNA-RuvA(4)-RuvB(12)-RuvC(2) complex forms which resolves the HJ.

It is found in the cytoplasm. In terms of biological role, the RuvA-RuvB-RuvC complex processes Holliday junction (HJ) DNA during genetic recombination and DNA repair, while the RuvA-RuvB complex plays an important role in the rescue of blocked DNA replication forks via replication fork reversal (RFR). RuvA specifically binds to HJ cruciform DNA, conferring on it an open structure. The RuvB hexamer acts as an ATP-dependent pump, pulling dsDNA into and through the RuvAB complex. HJ branch migration allows RuvC to scan DNA until it finds its consensus sequence, where it cleaves and resolves the cruciform DNA. The protein is Holliday junction branch migration complex subunit RuvA of Leifsonia xyli subsp. xyli (strain CTCB07).